A 3387-amino-acid polypeptide reads, in one-letter code: Genome polyprotein (3387 aa).

Residues 1-100 (MNQRKKVVRP…LNILNGRKRS (100 aa)) are Cytoplasmic-facing. The interval 36–71 (LFSGKGPLRMVLAFITFLRVLSIPPTAGILKRWGQL) is hydrophobic; homodimerization of capsid protein C. Residues 100–113 (STMTLLCLIPTAMA) constitute a propeptide, ER anchor for the capsid protein C, removed in mature form by serine protease NS3. A helical membrane pass occupies residues 101-117 (TMTLLCLIPTAMAFHLS). Residues 118-237 (TRDGEPLMIV…GAWKHAQRVE (120 aa)) are Extracellular-facing. A glycan (N-linked (GlcNAc...) asparagine; by host) is linked at Asn-182. Residues 238-258 (SWILRNPGFALLAGFMAYMIG) traverse the membrane as a helical segment. Over 259–265 (QTGIQRT) the chain is Cytoplasmic. Residues 266–279 (VFFVLMMLVAPSYG) form a helical membrane-spanning segment. The Extracellular portion of the chain corresponds to 280 to 723 (MRCVGVGNRD…AVHQVFGSVY (444 aa)). 6 disulfide bridges follow: Cys-282–Cys-309, Cys-339–Cys-400, Cys-353–Cys-384, Cys-371–Cys-395, Cys-464–Cys-564, and Cys-581–Cys-612. The N-linked (GlcNAc...) asparagine; by host glycan is linked to Asn-346. The segment at 377 to 390 (DRGWGNGCGLFGKG) is fusion peptide. Residues 724-746 (TTMFGGVSWMVRILIGFLVLWIG) traverse the membrane as a helical segment. Residues 747–750 (TNSR) are Cytoplasmic-facing. The helical transmembrane segment at 751–771 (NTSMAMTCIAVGGITLFLGFT) threads the bilayer. Residues 772-1194 (VHADTGCAVS…MLGDTMSGRM (423 aa)) are Extracellular-facing. 6 disulfide bridges follow: Cys-778-Cys-789, Cys-829-Cys-917, Cys-953-Cys-997, Cys-1054-Cys-1103, Cys-1065-Cys-1087, and Cys-1086-Cys-1090. 2 N-linked (GlcNAc...) asparagine; by host glycosylation sites follow: Asn-904 and Asn-981. The helical transmembrane segment at 1195–1218 (GGQIHLAIMAVFKMSPGYVLGIFL) threads the bilayer. At 1219–1224 (RKLTSR) the chain is on the lumenal side. The chain crosses the membrane as a helical span at residues 1225–1243 (ETALMVIGMAMTTVLSIPH). Residues 1244–1267 (DLMEFIDGISLGLILLKMVTHFDN) lie on the Cytoplasmic side of the membrane. Residues 1268 to 1288 (TQVGTLALSLTFIRSTMPLVM) form a helical membrane-spanning segment. Residue Ala-1289 is a topological domain, lumenal. Residues 1290 to 1308 (WRTIMAVLFVVTLIPLCRT) form a helical membrane-spanning segment. Residues 1309 to 1316 (SCLQKQSH) are Lumenal-facing. A helical transmembrane segment spans residues 1317 to 1337 (WVEITALILGAQALPVYLMTL). The Cytoplasmic portion of the chain corresponds to 1338-1345 (MKGASKRS). Residues 1346–1366 (WPLNEGIMAVGLVSLLGSALL) form a helical membrane-spanning segment. At 1367–1369 (KND) the chain is on the lumenal side. Residues 1370 to 1390 (VPLAGPMVAGGLLLAAYVMSG) form a helical membrane-spanning segment. Residues 1391-1437 (SSADLSLEKAANVQWDEMADITGSSPIIEVKQDEDGSFSIRDIEETN) are Cytoplasmic-facing. The interacts with and activates NS3 protease stretch occupies residues 1397–1436 (LEKAANVQWDEMADITGSSPIIEVKQDEDGSFSIRDIEET). The segment at residues 1438-1458 (MITLLVKLALITVSGLYPLAI) is an intramembrane region (helical). Residues 1459-2146 (PVTMTLWYMW…LNELPESLET (688 aa)) are Cytoplasmic-facing. The Peptidase S7 domain maps to 1475 to 1652 (SGALWDVPSP…ERTGEPDYEV (178 aa)). Residues His-1525, Asp-1549, and Ser-1609 each act as charge relay system; for serine protease NS3 activity in the active site. One can recognise a Helicase ATP-binding domain in the interval 1654 to 1810 (EDIFRKKRLT…QSNSPIEDIE (157 aa)). Residues 1658–1661 (RKKR) are important for RNA-binding. 1667–1674 (LHPGAGKT) serves as a coordination point for ATP. A DEAH box motif is present at residues 1758-1761 (DEAH). The Helicase C-terminal domain occupies 1820 to 1987 (TGFDWITDYQ…IIPTLFGPER (168 aa)). Residue Lys-1862 is modified to N6-acetyllysine; by host. A helical transmembrane segment spans residues 2147-2167 (LMLVALLGAMTAGIFLFFMQG). At 2168–2169 (KG) the chain is on the lumenal side. The segment at residues 2170-2190 (IGKLSMGLIAIAVASGLLWVA) is an intramembrane region (helical). Glu-2191 is a topological domain (lumenal). Residues 2192 to 2212 (IQPQWIAASIILEFFLMVLLI) traverse the membrane as a helical segment. Over 2213 to 2225 (PEPEKQRTPQDNQ) the chain is Cytoplasmic. The helical transmembrane segment at 2226 to 2246 (LIYVILTILTIIGLIAANEMG) threads the bilayer. At 2247–2270 (LIEKTKTDFGFYQVKTETTILDVD) the chain is on the lumenal side. The segment at residues 2271 to 2291 (LRPASAWTLYAVATTILTPML) is an intramembrane region (helical). Over 2292-2301 (RHTIENTSAN) the chain is Lumenal. N-linked (GlcNAc...) asparagine; by host glycans are attached at residues Asn-2297 and Asn-2301. The helical intramembrane region spans 2302–2322 (LSLAAIANQAAVLMGLGKGWP). The Lumenal segment spans residues 2323–2343 (LHRMDLGVPLLAMGCYSQVNP). Residues 2344–2364 (TTLIASLVMLLVHYAIIGPGL) form a helical membrane-spanning segment. Topologically, residues 2365–2409 (QAKATREAQKRTAAGIMKNPTVDGITVIDLEPISYDPKFEKQLGQ) are cytoplasmic. The chain crosses the membrane as a helical span at residues 2410–2430 (VMLLVLCAGQLLLMRTTWAFC). Over 2431 to 2455 (EVLTLATGPVLTLWEGNPGRFWNTT) the chain is Lumenal. Residue Asn-2453 is glycosylated (N-linked (GlcNAc...) asparagine; by host). Residues 2456 to 2476 (IAVSTANIFRGSYLAGAGLAF) traverse the membrane as a helical segment. Residues 2477 to 3387 (SLIKNAQTPR…SAPFESEGVL (911 aa)) are Cytoplasmic-facing. The region spanning 2489-2751 (TGTTGETLGE…DVDLGAGTRS (263 aa)) is the mRNA cap 0-1 NS5-type MT domain. Ser-2543 contributes to the S-adenosyl-L-methionine binding site. Ser-2543 carries the phosphoserine modification. The active-site For 2'-O-MTase activity is the Lys-2548. An SUMO-interacting motif motif is present at residues 2564–2567 (VVDL). Residues Gly-2573, Trp-2574, Thr-2591, Lys-2592, Asp-2618, and Val-2619 each coordinate S-adenosyl-L-methionine. Residue Asp-2633 is the For 2'-O-MTase activity of the active site. An S-adenosyl-L-methionine-binding site is contributed by Ile-2634. Active-site for 2'-O-MTase activity residues include Lys-2668 and Glu-2704. Tyr-2706 lines the S-adenosyl-L-methionine pocket. Zn(2+) contacts are provided by Glu-2925, His-2929, Cys-2934, and Cys-2937. The region spanning 3016 to 3166 (LIYADDTAGW…PLDERFSTSL (151 aa)) is the RdRp catalytic domain. Zn(2+) is bound by residues His-3200, Cys-3216, and Cys-3335.

This sequence in the N-terminal section; belongs to the class I-like SAM-binding methyltransferase superfamily. mRNA cap 0-1 NS5-type methyltransferase family. In terms of assembly, homodimer. Interacts (via N-terminus) with host EXOC1 (via C-terminus); this interaction results in EXOC1 degradation through the proteasome degradation pathway. As to quaternary structure, forms heterodimers with envelope protein E in the endoplasmic reticulum and Golgi. Homodimer; in the endoplasmic reticulum and Golgi. Interacts with protein prM. Interacts with non-structural protein 1. In terms of assembly, homodimer; Homohexamer when secreted. Interacts with envelope protein E. As to quaternary structure, interacts (via N-terminus) with serine protease NS3. Forms a heterodimer with serine protease NS3. May form homooligomers. In terms of assembly, forms a heterodimer with NS2B. Interacts with NS4B. Interacts with unphosphorylated RNA-directed RNA polymerase NS5; this interaction stimulates RNA-directed RNA polymerase NS5 guanylyltransferase activity. As to quaternary structure, interacts with host MAVS; this interaction inhibits the synthesis of IFN-beta. Interacts with host AUP1; the interaction occurs in the presence of Dengue virus NS4B and induces lipophagy which facilitates production of virus progeny particles. Interacts with serine protease NS3. In terms of assembly, homodimer. Interacts with host STAT2; this interaction inhibits the phosphorylation of the latter, and, when all viral proteins are present (polyprotein), targets STAT2 for degradation. Interacts with serine protease NS3. Interacts with host PAF1 complex; the interaction may prevent the recruitment of the PAF1 complex to interferon-responsive genes, and thus reduces the immune response. Specific enzymatic cleavages in vivo yield mature proteins. Cleavages in the lumen of endoplasmic reticulum are performed by host signal peptidase, whereas cleavages in the cytoplasmic side are performed by serine protease NS3. Signal cleavage at the 2K-4B site requires a prior NS3 protease-mediated cleavage at the 4A-2K site. In terms of processing, cleaved in post-Golgi vesicles by a host furin, releasing the mature small envelope protein M, and peptide pr. This cleavage is incomplete as up to 30% of viral particles still carry uncleaved prM. Post-translationally, N-glycosylated. N-glycosylated. The excreted form is glycosylated and this is required for efficient secretion of the protein from infected cells. In terms of processing, acetylated by host KAT5. Acetylation modulates NS3 RNA-binding and unwinding activities and plays an important positive role for viral replication. Post-translationally, sumoylation of RNA-directed RNA polymerase NS5 increases NS5 protein stability allowing proper viral RNA replication. Phosphorylated on serines residues. This phosphorylation may trigger NS5 nuclear localization.

The protein localises to the virion. It localises to the host nucleus. The protein resides in the host cytoplasm. It is found in the host perinuclear region. Its subcellular location is the secreted. The protein localises to the virion membrane. It localises to the host endoplasmic reticulum membrane. The protein resides in the host mitochondrion. It catalyses the reaction Selective hydrolysis of -Xaa-Xaa-|-Yaa- bonds in which each of the Xaa can be either Arg or Lys and Yaa can be either Ser or Ala.. The enzyme catalyses RNA(n) + a ribonucleoside 5'-triphosphate = RNA(n+1) + diphosphate. It carries out the reaction a ribonucleoside 5'-triphosphate + H2O = a ribonucleoside 5'-diphosphate + phosphate + H(+). The catalysed reaction is ATP + H2O = ADP + phosphate + H(+). It catalyses the reaction a 5'-end (5'-triphosphoguanosine)-ribonucleoside in mRNA + S-adenosyl-L-methionine = a 5'-end (N(7)-methyl 5'-triphosphoguanosine)-ribonucleoside in mRNA + S-adenosyl-L-homocysteine. The enzyme catalyses a 5'-end (N(7)-methyl 5'-triphosphoguanosine)-ribonucleoside in mRNA + S-adenosyl-L-methionine = a 5'-end (N(7)-methyl 5'-triphosphoguanosine)-(2'-O-methyl-ribonucleoside) in mRNA + S-adenosyl-L-homocysteine + H(+). Plays a role in virus budding by binding to the cell membrane and gathering the viral RNA into a nucleocapsid that forms the core of a mature virus particle. During virus entry, may induce genome penetration into the host cytoplasm after hemifusion induced by the surface proteins. Can migrate to the cell nucleus where it modulates host functions. Overcomes the anti-viral effects of host EXOC1 by sequestering and degrading the latter through the proteasome degradation pathway. In terms of biological role, inhibits RNA silencing by interfering with host Dicer. Functionally, prevents premature fusion activity of envelope proteins in trans-Golgi by binding to envelope protein E at pH6.0. After virion release in extracellular space, gets dissociated from E dimers. Its function is as follows. Acts as a chaperone for envelope protein E during intracellular virion assembly by masking and inactivating envelope protein E fusion peptide. prM is the only viral peptide matured by host furin in the trans-Golgi network probably to avoid catastrophic activation of the viral fusion activity in acidic Golgi compartment prior to virion release. prM-E cleavage is inefficient, and many virions are only partially matured. These uncleaved prM would play a role in immune evasion. May play a role in virus budding. Exerts cytotoxic effects by activating a mitochondrial apoptotic pathway through M ectodomain. May display a viroporin activity. In terms of biological role, binds to host cell surface receptor and mediates fusion between viral and cellular membranes. Envelope protein is synthesized in the endoplasmic reticulum in the form of heterodimer with protein prM. They play a role in virion budding in the ER, and the newly formed immature particle is covered with 60 spikes composed of heterodimer between precursor prM and envelope protein E. The virion is transported to the Golgi apparatus where the low pH causes dissociation of PrM-E heterodimers and formation of E homodimers. prM-E cleavage is inefficient, and many virions are only partially matured. These uncleaved prM would play a role in immune evasion. Functionally, involved in immune evasion, pathogenesis and viral replication. Once cleaved off the polyprotein, is targeted to three destinations: the viral replication cycle, the plasma membrane and the extracellular compartment. Essential for viral replication. Required for formation of the replication complex and recruitment of other non-structural proteins to the ER-derived membrane structures. Excreted as a hexameric lipoparticle that plays a role against host immune response. Antagonizing the complement function. Binds to the host macrophages and dendritic cells. Inhibits signal transduction originating from Toll-like receptor 3 (TLR3). Its function is as follows. Disrupts the host endothelial glycocalyx layer of host pulmonary microvascular endothelial cells, inducing degradation of sialic acid and shedding of heparan sulfate proteoglycans. NS1 induces expression of sialidases, heparanase, and activates cathepsin L, which activates heparanase via enzymatic cleavage. These effects are probably linked to the endothelial hyperpermeability observed in severe dengue disease. Component of the viral RNA replication complex that functions in virion assembly and antagonizes the host immune response. In terms of biological role, required cofactor for the serine protease function of NS3. May have membrane-destabilizing activity and form viroporins. Functionally, displays three enzymatic activities: serine protease, NTPase and RNA helicase. NS3 serine protease, in association with NS2B, performs its autocleavage and cleaves the polyprotein at dibasic sites in the cytoplasm: C-prM, NS2A-NS2B, NS2B-NS3, NS3-NS4A, NS4A-2K and NS4B-NS5. NS3 RNA helicase binds RNA and unwinds dsRNA in the 3' to 5' direction. Its function is as follows. Regulates the ATPase activity of the NS3 helicase activity. NS4A allows NS3 helicase to conserve energy during unwinding. Plays a role in the inhibition of the host innate immune response. Interacts with host MAVS and thereby prevents the interaction between RIGI and MAVS. In turn, IFN-beta production is impaired. Interacts with host AUP1 which mediates induction of lipophagy in host cells and facilitates production of virus progeny particles. Functions as a signal peptide for NS4B and is required for the interferon antagonism activity of the latter. In terms of biological role, induces the formation of ER-derived membrane vesicles where the viral replication takes place. Inhibits interferon (IFN)-induced host STAT1 phosphorylation and nuclear translocation, thereby preventing the establishment of cellular antiviral state by blocking the IFN-alpha/beta pathway. Functionally, replicates the viral (+) and (-) RNA genome, and performs the capping of genomes in the cytoplasm. NS5 methylates viral RNA cap at guanine N-7 and ribose 2'-O positions. Besides its role in RNA genome replication, also prevents the establishment of cellular antiviral state by blocking the interferon-alpha/beta (IFN-alpha/beta) signaling pathway. Inhibits host TYK2 and STAT2 phosphorylation, thereby preventing activation of JAK-STAT signaling pathway. May reduce immune responses by preventing the recruitment of the host PAF1 complex to interferon-responsive genes. This Aedes aegypti (Yellowfever mosquito) protein is Genome polyprotein.